The following is a 68-amino-acid chain: Protease A inhibitor 3 (68 aa).

N-acetylmethionine is present on methionine 1. Positions 1–14 (MNTDQQKVSEIFQS) are enriched in polar residues. Disordered regions lie at residues 1–21 (MNTDQQKVSEIFQSSKEKLQG) and 33–68 (MASQDKDGKTTDADESEKHNYQEQYNKLKGAGHKKE). Residues 1–32 (MNTDQQKVSEIFQSSKEKLQGDAKVVSDAFKK) form an inhibitory domain region. Residues 33–53 (MASQDKDGKTTDADESEKHNY) show a composition bias toward basic and acidic residues.

It belongs to the protease inhibitor I34 family.

Its function is as follows. Specific and potent inhibitor for yeast aspartic protease A (yscA). The proteinase acts as a folding template stabilizing the helical conformation in the inhibitor, which results in the potent and specific blockage of the proteolytic activity. This is Protease A inhibitor 3 (PAI3) from Saccharomyces cerevisiae (strain ATCC 204508 / S288c) (Baker's yeast).